A 182-amino-acid chain; its full sequence is NADH-quinone oxidoreductase subunit I (182 aa).

4Fe-4S ferredoxin-type domains are found at residues 52 to 82 (LTRDPDGEERCVACNLCAVACPVGCISLQKA) and 92 to 121 (EFFRINFSRCIFCGLCEEACPTTAIQLTPD). 8 residues coordinate [4Fe-4S] cluster: cysteine 62, cysteine 65, cysteine 68, cysteine 72, cysteine 101, cysteine 104, cysteine 107, and cysteine 111.

Belongs to the complex I 23 kDa subunit family. In terms of assembly, NDH-1 is composed of 13 different subunits. Subunits NuoA, H, J, K, L, M, N constitute the membrane sector of the complex. [4Fe-4S] cluster serves as cofactor.

It is found in the cell inner membrane. The catalysed reaction is a quinone + NADH + 5 H(+)(in) = a quinol + NAD(+) + 4 H(+)(out). Its function is as follows. NDH-1 shuttles electrons from NADH, via FMN and iron-sulfur (Fe-S) centers, to quinones in the respiratory chain. The immediate electron acceptor for the enzyme in this species is believed to be ubiquinone. Couples the redox reaction to proton translocation (for every two electrons transferred, four hydrogen ions are translocated across the cytoplasmic membrane), and thus conserves the redox energy in a proton gradient. This Pseudomonas putida (strain ATCC 47054 / DSM 6125 / CFBP 8728 / NCIMB 11950 / KT2440) protein is NADH-quinone oxidoreductase subunit I.